The following is a 306-amino-acid chain: Phospho-N-acetylmuramoyl-pentapeptide-transferase (306 aa).

The next 10 helical transmembrane spans lie at 1–21 (MDIY…IIFP), 49–69 (GTPT…GLIL), 75–95 (LIFT…VSIV), 104–124 (AWQK…TILQ), 130–150 (IFGI…LVSG), 160–180 (GIDG…MFFS), 182–202 (SSME…FLVY), 209–229 (VFMG…YALM), 234–254 (LSLL…ILQV), and 284–304 (IVGV…AFFL).

It belongs to the glycosyltransferase 4 family. MraY subfamily. It depends on Mg(2+) as a cofactor.

The protein resides in the cell inner membrane. It carries out the reaction UDP-N-acetyl-alpha-D-muramoyl-L-alanyl-gamma-D-glutamyl-meso-2,6-diaminopimeloyl-D-alanyl-D-alanine + di-trans,octa-cis-undecaprenyl phosphate = di-trans,octa-cis-undecaprenyl diphospho-N-acetyl-alpha-D-muramoyl-L-alanyl-D-glutamyl-meso-2,6-diaminopimeloyl-D-alanyl-D-alanine + UMP. Its pathway is cell wall biogenesis; peptidoglycan biosynthesis. In terms of biological role, catalyzes the initial step of the lipid cycle reactions in the biosynthesis of the cell wall peptidoglycan: transfers peptidoglycan precursor phospho-MurNAc-pentapeptide from UDP-MurNAc-pentapeptide onto the lipid carrier undecaprenyl phosphate, yielding undecaprenyl-pyrophosphoryl-MurNAc-pentapeptide, known as lipid I. This chain is Phospho-N-acetylmuramoyl-pentapeptide-transferase, found in Fervidobacterium nodosum (strain ATCC 35602 / DSM 5306 / Rt17-B1).